Reading from the N-terminus, the 102-residue chain is Signal recognition particle 19 kDa protein (102 aa).

The protein belongs to the SRP19 family. Part of the signal recognition particle protein translocation system, which is composed of SRP and FtsY. Archaeal SRP consists of a 7S RNA molecule of 300 nucleotides and two protein subunits: SRP54 and SRP19.

The protein resides in the cytoplasm. Its function is as follows. Involved in targeting and insertion of nascent membrane proteins into the cytoplasmic membrane. Binds directly to 7S RNA and mediates binding of the 54 kDa subunit of the SRP. This chain is Signal recognition particle 19 kDa protein, found in Saccharolobus solfataricus (strain ATCC 35092 / DSM 1617 / JCM 11322 / P2) (Sulfolobus solfataricus).